The following is a 425-amino-acid chain: Trigger factor (425 aa).

A PPIase FKBP-type domain is found at 163 to 248 (GDTAVIDFEG…VHEIKTKELP (86 aa)).

The protein belongs to the FKBP-type PPIase family. Tig subfamily.

It is found in the cytoplasm. It carries out the reaction [protein]-peptidylproline (omega=180) = [protein]-peptidylproline (omega=0). Its function is as follows. Involved in protein export. Acts as a chaperone by maintaining the newly synthesized protein in an open conformation. Functions as a peptidyl-prolyl cis-trans isomerase. The chain is Trigger factor from Bacillus cereus (strain Q1).